The following is a 196-amino-acid chain: Putative NADH dehydrogenase/NAD(P)H nitroreductase Pnuc_0932 (196 aa).

Belongs to the nitroreductase family. HadB/RutE subfamily. FMN serves as cofactor.

This Polynucleobacter asymbioticus (strain DSM 18221 / CIP 109841 / QLW-P1DMWA-1) (Polynucleobacter necessarius subsp. asymbioticus) protein is Putative NADH dehydrogenase/NAD(P)H nitroreductase Pnuc_0932.